The chain runs to 96 residues: GTPase HRas (96 aa).

M1 is modified (N-acetylmethionine). T2 bears the N-acetylthreonine; in GTPase HRas, N-terminally processed mark. 10–17 (GAGGVGKS) serves as a coordination point for GTP. An Effector region motif is present at residues 32-40 (YDPTIEDSY). 57-61 (DTAGQ) contributes to the GTP binding site.

This sequence belongs to the small GTPase superfamily. Ras family. In terms of assembly, in its GTP-bound form interacts with PLCE1. Interacts with TBC1D10C. Interacts with RGL3. Interacts with HSPD1. Found in a complex with at least BRAF, HRAS, MAP2K1, MAPK3 and RGS14. Interacts (active GTP-bound form) with RGS14 (via RBD 1 domain). Forms a signaling complex with RASGRP1 and DGKZ. Interacts with RASSF5. Interacts with PDE6D. Interacts with IKZF3. Interacts with RACK1. Interacts with PIK3CG; the interaction is required for membrane recruitment and beta-gamma G protein dimer-dependent activation of the PI3K gamma complex PIK3CG:PIK3R6. Interacts with RAPGEF2. Interacts (active GTP-bound form) with both SHOC2 and PP1c (all isoforms) to form a tertiary complex; SHOC2 and PP1c preferably bind M-Ras/MRAS, but they also bind K-Ras/KRAS, N-Ras/NRAS and H-Ras/HRAS. Interacts (in GTP-bound form) with Oog1. Interacts (GTP-bound form) with MAPKAP1/SIN1; inhibiting H-Ras/HRAS activity. Ubiquitinated by the BCR(LZTR1) E3 ubiquitin ligase complex at Lys-170 in a non-degradative manner, leading to inhibit Ras signaling by decreasing Ras association with membranes.

The protein resides in the cell membrane. It localises to the golgi apparatus. It is found in the golgi apparatus membrane. It catalyses the reaction GTP + H2O = GDP + phosphate + H(+). With respect to regulation, alternates between an inactive form bound to GDP and an active form bound to GTP. Activated by a guanine nucleotide-exchange factor (GEF) and inactivated by a GTPase-activating protein (GAP). In terms of biological role, ras proteins bind GDP/GTP and possess intrinsic GTPase activity. The protein is GTPase HRas (HRAS) of Mesocricetus auratus (Golden hamster).